The sequence spans 187 residues: NADPH-dependent 3-demethoxyubiquinone 3-hydroxylase, mitochondrial (187 aa).

The transit peptide at 1-8 (MFRVITRG) directs the protein to the mitochondrion. An NADH-binding site is contributed by lysine 21. 2 tandem repeats follow at residues 28–99 (AGEL…SALL) and 100–187 (GKEG…AEKI). The segment at 28–187 (AGELGADRIY…KGAIAIAEKI (160 aa)) is 2 X approximate tandem repeats. Fe cation is bound by residues glutamate 30, glutamate 60, histidine 63, glutamate 112, glutamate 148, and histidine 151. Lysine 186 provides a ligand contact to NADH.

Belongs to the COQ7 family. As to quaternary structure, component of a multi-subunit COQ enzyme complex. The cofactor is Fe cation.

The protein resides in the mitochondrion inner membrane. The protein localises to the mitochondrion. It is found in the nucleus. It carries out the reaction a 5-methoxy-2-methyl-3-(all-trans-polyprenyl)benzoquinone + NADH + O2 = a 3-demethylubiquinone + NAD(+) + H2O. Its pathway is cofactor biosynthesis; ubiquinone biosynthesis. Functionally, catalyzes the hydroxylation of the 5-methoxy-2-methyl-3-(all-trans-polyprenyl)benzoquinone at the C6 position and participates in the biosynthesis of ubiquinone. Catalyzes the reaction through a substrate-mediated reduction pathway, whereby NADH shuttles electrons to 5-methoxy-2-methyl-3-(all-trans-decaprenyl)benzoquinone, which then transfers the electrons to the two Fe(3+) centers. The binding of 5-methoxy-2-methyl-3-(all-trans-polyprenyl)benzoquinone (DMQn) mediates reduction of the diiron center by nicotinamide adenine dinucleotide (NADH) and initiates oxygen activation for subsequent DMQ hydroxylation. Also has a structural role in the COQ enzyme complex, stabilizing other COQ polypeptides. Involved in lifespan determination in a ubiquinone-independent manner. Plays a role in modulating mitochondrial stress responses, acting in the nucleus, perhaps via regulating gene expression, independent of its characterized mitochondrial function in ubiquinone biosynthesis. Plays a role in modulating polyribosome formation. The sequence is that of NADPH-dependent 3-demethoxyubiquinone 3-hydroxylase, mitochondrial from Caenorhabditis elegans.